The following is a 264-amino-acid chain: Thymidylate synthase (264 aa).

R21 serves as a coordination point for dUMP. Residue H51 participates in (6R)-5,10-methylene-5,6,7,8-tetrahydrofolate binding. A dUMP-binding site is contributed by 126–127 (RR). C146 functions as the Nucleophile in the catalytic mechanism. DUMP contacts are provided by residues 166–169 (RSAD), N177, and 207–209 (HIY). D169 lines the (6R)-5,10-methylene-5,6,7,8-tetrahydrofolate pocket. A263 contacts (6R)-5,10-methylene-5,6,7,8-tetrahydrofolate.

This sequence belongs to the thymidylate synthase family. Bacterial-type ThyA subfamily. As to quaternary structure, homodimer.

The protein resides in the cytoplasm. The enzyme catalyses dUMP + (6R)-5,10-methylene-5,6,7,8-tetrahydrofolate = 7,8-dihydrofolate + dTMP. It participates in pyrimidine metabolism; dTTP biosynthesis. Catalyzes the reductive methylation of 2'-deoxyuridine-5'-monophosphate (dUMP) to 2'-deoxythymidine-5'-monophosphate (dTMP) while utilizing 5,10-methylenetetrahydrofolate (mTHF) as the methyl donor and reductant in the reaction, yielding dihydrofolate (DHF) as a by-product. This enzymatic reaction provides an intracellular de novo source of dTMP, an essential precursor for DNA biosynthesis. The chain is Thymidylate synthase from Rhizobium meliloti (strain 1021) (Ensifer meliloti).